Consider the following 87-residue polypeptide: Sec-independent protein translocase protein TatA (87 aa).

Residues glycine 3–alanine 23 form a helical membrane-spanning segment. Positions methionine 47–alanine 87 are disordered. Low complexity predominate over residues proline 52–alanine 87.

This sequence belongs to the TatA/E family. In terms of assembly, the Tat system comprises two distinct complexes: a TatABC complex, containing multiple copies of TatA, TatB and TatC subunits, and a separate TatA complex, containing only TatA subunits. Substrates initially bind to the TatABC complex, which probably triggers association of the separate TatA complex to form the active translocon.

Its subcellular location is the cell membrane. Functionally, part of the twin-arginine translocation (Tat) system that transports large folded proteins containing a characteristic twin-arginine motif in their signal peptide across membranes. TatA could form the protein-conducting channel of the Tat system. The sequence is that of Sec-independent protein translocase protein TatA from Nocardia farcinica (strain IFM 10152).